Consider the following 208-residue polypeptide: Ribosome maturation factor RimP (208 aa).

The segment at 165–208 (TAQPKKGQRQGKEPAKESGQKKQLAEAAPRSGSKRSERGSEKRK) is disordered. Basic and acidic residues-rich tracts occupy residues 174 to 188 (QGKEPAKESGQKKQL) and 198 to 208 (KRSERGSEKRK).

Belongs to the RimP family.

Its subcellular location is the cytoplasm. Its function is as follows. Required for maturation of 30S ribosomal subunits. This Sorangium cellulosum (strain So ce56) (Polyangium cellulosum (strain So ce56)) protein is Ribosome maturation factor RimP.